The chain runs to 124 residues: Small ribosomal subunit protein uS12 (124 aa).

Asp-89 bears the 3-methylthioaspartic acid mark.

This sequence belongs to the universal ribosomal protein uS12 family. Part of the 30S ribosomal subunit. Contacts proteins S8 and S17. May interact with IF1 in the 30S initiation complex.

Functionally, with S4 and S5 plays an important role in translational accuracy. Its function is as follows. Interacts with and stabilizes bases of the 16S rRNA that are involved in tRNA selection in the A site and with the mRNA backbone. Located at the interface of the 30S and 50S subunits, it traverses the body of the 30S subunit contacting proteins on the other side and probably holding the rRNA structure together. The combined cluster of proteins S8, S12 and S17 appears to hold together the shoulder and platform of the 30S subunit. The sequence is that of Small ribosomal subunit protein uS12 from Shewanella loihica (strain ATCC BAA-1088 / PV-4).